The sequence spans 118 residues: uncharacterized protein (118 aa).

The next 3 helical transmembrane spans lie at 20-39, 46-63, and 67-85; these read VEGPLAGLIIILIALLLLWI, LVVVLIGAVVGYFVGEAV, and LSLVFAAGFAIVGIWAMSG. The segment at 85 to 118 is disordered; it reads GDKSKKKGKKQRSILKDADDWDDDSWDDEGDWDE. The span at 88-97 shows a compositional bias: basic residues; it reads SKKKGKKQRS. Residues 103-118 are compositionally biased toward acidic residues; that stretch reads DDWDDDSWDDEGDWDE.

Its subcellular location is the cell membrane. This is an uncharacterized protein from Archaeoglobus fulgidus (strain ATCC 49558 / DSM 4304 / JCM 9628 / NBRC 100126 / VC-16).